The primary structure comprises 97 residues: Bacterial microcompartment shell protein EutM (97 aa).

The 85-residue stretch at 3–87 folds into the BMC domain; sequence ALGMIETRGL…PHGDLEEVFP (85 aa).

Belongs to the bacterial microcompartments protein family. As to quaternary structure, homohexamer with a central pore of up to 8.6 Angstroms diameter. The hexamers pack into a two-dimensional array. Interacts with EutQ.

Its subcellular location is the bacterial microcompartment. It functions in the pathway amine and polyamine degradation; ethanolamine degradation. Its function is as follows. Probably a major component of the bacterial microcompartment (BMC) shell dedicated to ethanolamine degradation. Each homohexamer has a central pore with an opening of up to 8.6 Angstroms. A positively-charged funnel leads to the pore from each side of the hexamer. The pore probably allows metabolite passage into and out of the BMC. This chain is Bacterial microcompartment shell protein EutM (eutM), found in Escherichia coli O6:H1 (strain CFT073 / ATCC 700928 / UPEC).